Here is a 569-residue protein sequence, read N- to C-terminus: Sulfite reductase [NADPH] hemoprotein beta-component (569 aa).

Residues cysteine 433, cysteine 439, cysteine 478, and cysteine 482 each contribute to the [4Fe-4S] cluster site. Residue cysteine 482 coordinates siroheme.

This sequence belongs to the nitrite and sulfite reductase 4Fe-4S domain family. As to quaternary structure, alpha(8)-beta(8). The alpha component is a flavoprotein, the beta component is a hemoprotein. It depends on siroheme as a cofactor. The cofactor is [4Fe-4S] cluster.

It carries out the reaction hydrogen sulfide + 3 NADP(+) + 3 H2O = sulfite + 3 NADPH + 4 H(+). It participates in sulfur metabolism; hydrogen sulfide biosynthesis; hydrogen sulfide from sulfite (NADPH route): step 1/1. In terms of biological role, component of the sulfite reductase complex that catalyzes the 6-electron reduction of sulfite to sulfide. This is one of several activities required for the biosynthesis of L-cysteine from sulfate. The chain is Sulfite reductase [NADPH] hemoprotein beta-component from Pseudoalteromonas atlantica (strain T6c / ATCC BAA-1087).